The following is a 265-amino-acid chain: 14-3-3-like protein GF14-D (265 aa).

A disordered region spans residues Asp244–Gln265. A compositionally biased stretch (basic and acidic residues) spans Asp251–Gln265.

Belongs to the 14-3-3 family. Interacts with BZR1. Interacts with ABI5.

In terms of biological role, is associated with a DNA binding complex that binds to the G box, a well-characterized cis-acting DNA regulatory element found in plant genes. The sequence is that of 14-3-3-like protein GF14-D (GF14D) from Oryza sativa subsp. japonica (Rice).